A 133-amino-acid polypeptide reads, in one-letter code: U-scoloptoxin(05)-Sa1a (133 aa).

The signal sequence occupies residues 1–24; the sequence is MPSLCIIALFGTLTFYTLIPSIHT.

The protein belongs to the scoloptoxin-05 family. In terms of processing, contains 5 disulfide bonds. In terms of tissue distribution, expressed by the venom gland.

It localises to the secreted. In Scolopendra alternans (Florida Keys giant centipede), this protein is U-scoloptoxin(05)-Sa1a.